A 116-amino-acid chain; its full sequence is Large ribosomal subunit protein bL19 (116 aa).

This sequence belongs to the bacterial ribosomal protein bL19 family.

This protein is located at the 30S-50S ribosomal subunit interface and may play a role in the structure and function of the aminoacyl-tRNA binding site. In Pseudomonas aeruginosa (strain LESB58), this protein is Large ribosomal subunit protein bL19.